A 421-amino-acid polypeptide reads, in one-letter code: 4'-demethylrebeccamycin synthase (421 aa).

The protein belongs to the glycosyltransferase 28 family.

It carries out the reaction 4'-demethylrebeccamycin + H2O = dichloroarcyriaflavin A + beta-D-glucose. Its pathway is alkaloid biosynthesis. Catalyzes the penultimate step in the biosynthesis of rebeccamycin, an indolocarbazole alkaloid that inhibits topoisomerase 1. Has a wide substrate range, including staurosporine aglycone, EJG-III-108A, J-104303, 6-N-methyl-arcyriaflavin and indolo-[2,3-a]-carbazole. This chain is 4'-demethylrebeccamycin synthase (rebG), found in Lentzea aerocolonigenes (Lechevalieria aerocolonigenes).